Reading from the N-terminus, the 665-residue chain is Macrolide export ATP-binding/permease protein MacB (665 aa).

Positions 17–255 constitute an ABC transporter domain; the sequence is MQVKGLIREF…AAQPASIIDK (239 aa). An ATP-binding site is contributed by 53 to 60; that stretch reads GQSGSGKS. The next 4 membrane-spanning stretches (helical) occupy residues 287-307, 544-564, 588-608, and 630-650; these read LLTMLGIIIGIASVVSVVGLG, IAIISLIVGGIGVMNIMLVSV, FLIEAILVCILGGLLGIGLAF, and SIIAAFVCSTLIGVVFGFLPA.

This sequence belongs to the ABC transporter superfamily. Macrolide exporter (TC 3.A.1.122) family. In terms of assembly, homodimer. Part of the tripartite efflux system MacAB-TolC, which is composed of an inner membrane transporter, MacB, a periplasmic membrane fusion protein, MacA, and an outer membrane component, TolC. The complex forms a large protein conduit and can translocate molecules across both the inner and outer membranes. Interacts with MacA.

It is found in the cell inner membrane. In terms of biological role, part of the tripartite efflux system MacAB-TolC. MacB is a non-canonical ABC transporter that contains transmembrane domains (TMD), which form a pore in the inner membrane, and an ATP-binding domain (NBD), which is responsible for energy generation. Confers resistance against macrolides. The chain is Macrolide export ATP-binding/permease protein MacB from Psychrobacter cryohalolentis (strain ATCC BAA-1226 / DSM 17306 / VKM B-2378 / K5).